The following is a 162-amino-acid chain: uncharacterized protein (162 aa).

A signal peptide spans 1–34 (MRKKNNIKKWLLIIAGFLIICIITLFVMVSGNKV).

This is an uncharacterized protein from Bacillus subtilis (strain 168).